A 95-amino-acid chain; its full sequence is Phosphoribosyl-ATP pyrophosphatase (95 aa).

Belongs to the PRA-PH family.

Its subcellular location is the cytoplasm. The catalysed reaction is 1-(5-phospho-beta-D-ribosyl)-ATP + H2O = 1-(5-phospho-beta-D-ribosyl)-5'-AMP + diphosphate + H(+). Its pathway is amino-acid biosynthesis; L-histidine biosynthesis; L-histidine from 5-phospho-alpha-D-ribose 1-diphosphate: step 2/9. This chain is Phosphoribosyl-ATP pyrophosphatase, found in Methanocella arvoryzae (strain DSM 22066 / NBRC 105507 / MRE50).